A 383-amino-acid chain; its full sequence is Chorismate synthase (383 aa).

NADP(+)-binding residues include arginine 39 and arginine 45. Residues 127 to 129 (RAS), 249 to 250 (QS), glycine 294, 309 to 313 (KPIPT), and arginine 335 each bind FMN.

This sequence belongs to the chorismate synthase family. Homotetramer. It depends on FMNH2 as a cofactor.

It carries out the reaction 5-O-(1-carboxyvinyl)-3-phosphoshikimate = chorismate + phosphate. It participates in metabolic intermediate biosynthesis; chorismate biosynthesis; chorismate from D-erythrose 4-phosphate and phosphoenolpyruvate: step 7/7. Catalyzes the anti-1,4-elimination of the C-3 phosphate and the C-6 proR hydrogen from 5-enolpyruvylshikimate-3-phosphate (EPSP) to yield chorismate, which is the branch point compound that serves as the starting substrate for the three terminal pathways of aromatic amino acid biosynthesis. This reaction introduces a second double bond into the aromatic ring system. The sequence is that of Chorismate synthase from Caldicellulosiruptor bescii (strain ATCC BAA-1888 / DSM 6725 / KCTC 15123 / Z-1320) (Anaerocellum thermophilum).